Here is a 315-residue protein sequence, read N- to C-terminus: tRNA pseudouridine synthase B (315 aa).

Asp54 functions as the Nucleophile in the catalytic mechanism.

This sequence belongs to the pseudouridine synthase TruB family. Type 1 subfamily.

It catalyses the reaction uridine(55) in tRNA = pseudouridine(55) in tRNA. Its function is as follows. Responsible for synthesis of pseudouridine from uracil-55 in the psi GC loop of transfer RNAs. The protein is tRNA pseudouridine synthase B of Agrobacterium fabrum (strain C58 / ATCC 33970) (Agrobacterium tumefaciens (strain C58)).